The chain runs to 135 residues: RxLR effector protein Avh5 (135 aa).

An N-terminal signal peptide occupies residues 1 to 19; the sequence is MRLQFFLVMAVATLATISA. Positions 43–71 match the RxLR-dEER motif; it reads RFLRTADTDIVYEPKVHNPGKKQVFIEDK. Residues K81, K83, and K84 each coordinate a 1,2-diacyl-sn-glycero-3-phospho-(1D-myo-inositol-3-phosphate).

The protein belongs to the RxLR effector family.

It is found in the secreted. Its subcellular location is the host cell. In terms of biological role, effector that suppresses plant defense responses during the early stages of pathogen infection. Suppresses cell death induced by effectors and PAMPs in plant hosts. The sequence is that of RxLR effector protein Avh5 from Phytophthora sojae (Soybean stem and root rot agent).